The chain runs to 136 residues: Large ribosomal subunit protein eL27B (136 aa).

The protein belongs to the eukaryotic ribosomal protein eL27 family. Component of the large ribosomal subunit (LSU). Mature yeast ribosomes consist of a small (40S) and a large (60S) subunit. The 40S small subunit contains 1 molecule of ribosomal RNA (18S rRNA) and 33 different proteins (encoded by 57 genes). The large 60S subunit contains 3 rRNA molecules (25S, 5.8S and 5S rRNA) and 46 different proteins (encoded by 81 genes).

Its subcellular location is the cytoplasm. Component of the ribosome, a large ribonucleoprotein complex responsible for the synthesis of proteins in the cell. The small ribosomal subunit (SSU) binds messenger RNAs (mRNAs) and translates the encoded message by selecting cognate aminoacyl-transfer RNA (tRNA) molecules. The large subunit (LSU) contains the ribosomal catalytic site termed the peptidyl transferase center (PTC), which catalyzes the formation of peptide bonds, thereby polymerizing the amino acids delivered by tRNAs into a polypeptide chain. The nascent polypeptides leave the ribosome through a tunnel in the LSU and interact with protein factors that function in enzymatic processing, targeting, and the membrane insertion of nascent chains at the exit of the ribosomal tunnel. The protein is Large ribosomal subunit protein eL27B of Saccharomyces cerevisiae (strain ATCC 204508 / S288c) (Baker's yeast).